The primary structure comprises 222 residues: Eukaryotic translation initiation factor 3 subunit K (222 aa).

A PCI domain is found at 46 to 208 (YDLEANLAVL…KIKTKNITEK (163 aa)).

It belongs to the eIF-3 subunit K family. As to quaternary structure, component of the eukaryotic translation initiation factor 3 (eIF-3) complex. The eIF-3 complex interacts with pix.

Its subcellular location is the cytoplasm. Component of the eukaryotic translation initiation factor 3 (eIF-3) complex, which is involved in protein synthesis of a specialized repertoire of mRNAs and, together with other initiation factors, stimulates binding of mRNA and methionyl-tRNAi to the 40S ribosome. The eIF-3 complex specifically targets and initiates translation of a subset of mRNAs involved in cell proliferation. The sequence is that of Eukaryotic translation initiation factor 3 subunit K from Drosophila erecta (Fruit fly).